A 276-amino-acid chain; its full sequence is Rhomboid protease GlpG (276 aa).

6 consecutive transmembrane segments (helical) span residues 94–114, 142–162, 169–189, 192–212, 229–249, and 250–270; these read GPVT…MQIL, ALMH…WYLG, LGSG…GYVQ, FSGP…GYVW, LIIF…GMSM, and ANGA…VDSL. S201 acts as the Nucleophile in catalysis. Residue H254 is part of the active site.

It belongs to the peptidase S54 family.

The protein localises to the cell inner membrane. It carries out the reaction Cleaves type-1 transmembrane domains using a catalytic dyad composed of serine and histidine that are contributed by different transmembrane domains.. Functionally, rhomboid-type serine protease that catalyzes intramembrane proteolysis. The polypeptide is Rhomboid protease GlpG (Escherichia coli (strain 55989 / EAEC)).